The primary structure comprises 212 residues: MKKILITGFEPFGNDKINPALEAVKLIAGRKLNGGEIVICQVPVVRYKSIETVKQAIEEQQPYAVITVGQASGRAAITPERIAINVDDFRIPDNEGIQVIDEPVVAGGPDAYFTTLPIKAMVSEIQAQGIPATVSNTAGTFVCNHLFYGIQHYLKDTNVRHGFVHIPLLPEQSVDGSQPTMKLEQIAEGLAIAAQAIIDNDSDIQQGAGTIC.

Active-site residues include Glu-80, Cys-143, and His-165.

The protein belongs to the peptidase C15 family. In terms of assembly, homotetramer.

It localises to the cytoplasm. It catalyses the reaction Release of an N-terminal pyroglutamyl group from a polypeptide, the second amino acid generally not being Pro.. Removes 5-oxoproline from various penultimate amino acid residues except L-proline. The protein is Pyrrolidone-carboxylate peptidase of Aliivibrio fischeri (strain MJ11) (Vibrio fischeri).